A 132-amino-acid polypeptide reads, in one-letter code: Fatty acid-binding protein, liver (132 aa).

Position 1 is an N-acetylvaline (Val-1). Position 19 is a phosphotyrosine; by Tyr-kinases (Tyr-19).

It belongs to the calycin superfamily. Fatty-acid binding protein (FABP) family.

The protein localises to the cytoplasm. In terms of biological role, FABPs are thought to play a role in the intracellular transport of long-chain fatty acids and their acyl-CoA esters. The chain is Fatty acid-binding protein, liver from Ginglymostoma cirratum (Nurse shark).